Reading from the N-terminus, the 213-residue chain is 2-dehydro-3-deoxy-phosphogluconate aldolase (213 aa).

Glu45 serves as the catalytic Proton acceptor. Residues Arg49, Thr73, and Lys133 each contribute to the pyruvate site. Lys133 functions as the Schiff-base intermediate with substrate in the catalytic mechanism.

The protein belongs to the KHG/KDPG aldolase family. As to quaternary structure, homotrimer.

The protein localises to the cytoplasm. The catalysed reaction is 2-dehydro-3-deoxy-6-phospho-D-gluconate = D-glyceraldehyde 3-phosphate + pyruvate. It participates in carbohydrate acid metabolism; 2-dehydro-3-deoxy-D-gluconate degradation; D-glyceraldehyde 3-phosphate and pyruvate from 2-dehydro-3-deoxy-D-gluconate: step 2/2. In terms of biological role, involved in the degradation of glucose via the Entner-Doudoroff pathway. Catalyzes the reversible, stereospecific retro-aldol cleavage of 2-keto-3-deoxy-6-phosphogluconate (KDPG) to pyruvate and D-glyceraldehyde-3-phosphate. In Dickeya dadantii (strain 3937) (Erwinia chrysanthemi (strain 3937)), this protein is 2-dehydro-3-deoxy-phosphogluconate aldolase (eda).